The sequence spans 262 residues: Indole-3-glycerol phosphate synthase (262 aa).

The protein belongs to the TrpC family.

It carries out the reaction 1-(2-carboxyphenylamino)-1-deoxy-D-ribulose 5-phosphate + H(+) = (1S,2R)-1-C-(indol-3-yl)glycerol 3-phosphate + CO2 + H2O. It functions in the pathway amino-acid biosynthesis; L-tryptophan biosynthesis; L-tryptophan from chorismate: step 4/5. The sequence is that of Indole-3-glycerol phosphate synthase from Clostridium kluyveri (strain NBRC 12016).